Reading from the N-terminus, the 453-residue chain is Lysine histidine transporter-like 1 (453 aa).

Residues 1-44 are Cytoplasmic-facing; sequence MYIQMTDGVPPPPEQSSLDHRIDELERQKEIDDWLPITSSRNAK. 2 helical membrane passes run 45-65 and 66-86; these read WWYSTFHNVTAMVGAGVLGLP and FFMAQLGWGPGIAVLILSWII. At 87–122 the chain is on the cytoplasmic side; that stretch reads TLYTLWQMVEMHEMVPGKRFDRYHELGQFAFGERLG. The chain crosses the membrane as a helical span at residues 123 to 143; sequence LYIIVPQQIIVEVGVCIVYMV. At 144 to 164 the chain is on the extracellular side; that stretch reads TGGQSLKKFHEIACQDCSPIR. The chain crosses the membrane as a helical span at residues 165–185; it reads LSFFIMIFASSHFVLSHLPNF. Residues 186 to 187 lie on the Cytoplasmic side of the membrane; the sequence is NS. A helical membrane pass occupies residues 188 to 208; it reads ISGVSLVAAVMSLSYSTIAWT. Residues 209–231 are Extracellular-facing; sequence ATAAKGVQEDVQYGYKSGTTAST. The helical transmembrane segment at 232–252 threads the bilayer; it reads VLSFFTGLGGIAFAYAGHNVV. Residues 253-276 lie on the Cytoplasmic side of the membrane; the sequence is LEIQATIPSTPSNPSKGPMWRGVV. The helical transmembrane segment at 277-297 threads the bilayer; sequence VAYVVVALCYFPVALVGYGVF. Topologically, residues 298–318 are extracellular; that stretch reads GNAVLDNVLMSLETPVWAIAT. A helical membrane pass occupies residues 319–339; that stretch reads ANLFVVMHVIGSYQIFAMPVF. Residues 340–359 are Cytoplasmic-facing; sequence DMVETFLVKKLNFKPSTVLR. Residues 360–382 form a helical membrane-spanning segment; that stretch reads FIVRNVYVALTMFIGIMIPFFGG. The Extracellular segment spans residues 383 to 385; it reads LLA. The helical transmembrane segment at 386–408 threads the bilayer; sequence FFGGFAFAPTSYFLPCIMWLLIY. Residues 409–412 lie on the Cytoplasmic side of the membrane; sequence KPKR. The chain crosses the membrane as a helical span at residues 413 to 433; sequence FSLSWWTNWVCIVLGVVLMIL. The Extracellular segment spans residues 434–453; sequence SSIGGLRQIIIQSKDYSFFS.

The protein belongs to the amino acid/polyamine transporter 2 family. Amino acid/auxin permease (AAAP) (TC 2.A.18.2) subfamily.

The protein resides in the cell membrane. Amino acid transporter. The sequence is that of Lysine histidine transporter-like 1 from Arabidopsis thaliana (Mouse-ear cress).